The following is a 222-amino-acid chain: NADH dehydrogenase [ubiquinone] iron-sulfur protein 8-B, mitochondrial (222 aa).

4Fe-4S ferredoxin-type domains lie at 114-143 (RRYP…IEAE) and 153-182 (TRYD…EGPN). [4Fe-4S] cluster contacts are provided by C123, C126, C129, C133, C162, C165, C168, and C172.

It belongs to the complex I 23 kDa subunit family. In terms of assembly, complex I is composed of at least 49 different subunits. This is a component of the iron-sulfur (IP) fragment of the enzyme. The cofactor is [4Fe-4S] cluster.

The protein resides in the mitochondrion. The catalysed reaction is a ubiquinone + NADH + 5 H(+)(in) = a ubiquinol + NAD(+) + 4 H(+)(out). Functionally, core subunit of the mitochondrial membrane respiratory chain NADH dehydrogenase (Complex I) that is believed to belong to the minimal assembly required for catalysis. Complex I functions in the transfer of electrons from NADH to the respiratory chain. The immediate electron acceptor for the enzyme is believed to be ubiquinone. May donate electrons to ubiquinone. This Arabidopsis thaliana (Mouse-ear cress) protein is NADH dehydrogenase [ubiquinone] iron-sulfur protein 8-B, mitochondrial.